The sequence spans 348 residues: Protein pelota homolog (348 aa).

This sequence belongs to the eukaryotic release factor 1 family. Pelota subfamily. In terms of assembly, monomer. It depends on a divalent metal cation as a cofactor.

The protein resides in the cytoplasm. In terms of biological role, may function in recognizing stalled ribosomes, interact with stem-loop structures in stalled mRNA molecules, and effect endonucleolytic cleavage of the mRNA. May play a role in the release non-functional ribosomes and degradation of damaged mRNAs. Has endoribonuclease activity. This chain is Protein pelota homolog, found in Methanococcus vannielii (strain ATCC 35089 / DSM 1224 / JCM 13029 / OCM 148 / SB).